Here is a 1040-residue protein sequence, read N- to C-terminus: Exosome RNA helicase MTR4 (1040 aa).

Alanine 2 carries the N-acetylalanine modification. A disordered region spans residues 16-77; it reads DSTSAAGAKK…GTDEPIFGKK (62 aa). The segment covering 23–33 has biased composition (basic and acidic residues); it reads AKKDKEKEKWK. Residue lysine 24 forms a Glycyl lysine isopeptide (Lys-Gly) (interchain with G-Cter in SUMO2) linkage. Position 38 is a phosphoserine (serine 38). A compositionally biased stretch (basic and acidic residues) spans 41 to 50; sequence KAGKRLDTKL. N6-acetyllysine occurs at positions 49 and 76. ATP contacts are provided by residues isoleucine 137, 159–166, serine 162, glycine 164, lysine 165, and threonine 166; that span reads AHTSAGKT. The Helicase ATP-binding domain occupies 146–302; sequence IQCVDNNQSV…WICHLHKQPC (157 aa). A DEIH box motif is present at residues 250 to 253; that stretch reads DEIH. Lysine 356 participates in a covalent cross-link: Glycyl lysine isopeptide (Lys-Gly) (interchain with G-Cter in SUMO2). The 173-residue stretch at 403–575 folds into the Helicase C-terminal domain; sequence QMTKLDFNTD…NMVLNLLRVE (173 aa). Glycyl lysine isopeptide (Lys-Gly) (interchain with G-Cter in SUMO2) cross-links involve residues lysine 682 and lysine 721.

The protein belongs to the helicase family. SKI2 subfamily. In terms of assembly, component of a TRAMP-like complex, an ATP-dependent exosome regulatory complex consisting of a helicase (MTREX), an oligadenylate polymerase (TENT4B or TENT4A), and a substrate specific RNA-binding factor (ZCCHC7 or ZCCHC8). Several TRAMP-like complexes exist with specific compositions and are associated with nuclear, or nucleolar RNA exosomes. Identified in the spliceosome C complex. Component of the poly(A) tail exosome targeting (PAXT) complex made of PABPN1, ZFC3H1 and MTREX that directs a subset of long and polyadenylated poly(A) RNAs for exosomal degradation. Component of the nuclear exosome targeting (NEXT) complex composed of MTREX, ZCCHC8, and RBM7 that directs a subset of non-coding short-lived RNAs for exosomal degradation. Interacts with ZCCHC8; this interaction bridges the interaction between RBM7 and MTREX. Binds to ZFC3H1 and RBM7 in a RNase-insensitive manner. Interacts with EXOSC10; the interaction mediates the association of MTREX with nuclear RNA exosomes. Interacts with isoform 1 of NVL in an ATP-dependent manner; the interaction is required to associate NVL with nuclear RNA exosome. Interacts with WDR74; the interaction dissociation in a late stage of rRNA synthesis is required for appropriate maturation of pre-60S particles and depends on the ATPase activity of NVL. Interacts with MPHOSPH6. Interacts with the RNA cap-binding complex proteins NCBP1 and SRRT. Interacts with NRDE2; the interaction is direct and negatively regulates MTREX function in exosomal degradation by changing its conformation precluding interaction with ZFC3H1, the RNA cap-binding complex proteins NCBP1 and SRRT, and association with the exosome. Associates with the RNA exosome complex.

It localises to the nucleus. It is found in the nucleoplasm. Its subcellular location is the nucleolus. The protein resides in the nucleus speckle. The catalysed reaction is ATP + H2O = ADP + phosphate + H(+). With respect to regulation, activated when MTREX is incorporated into NEXT complex an the nuclear RNA exosome complex. In terms of biological role, catalyzes the ATP-dependent unwinding of RNA duplexes with a single-stranded 3' RNA extension. Central subunit of many protein complexes, namely TRAMP-like, nuclear exosome targeting (NEXT) and poly(A) tail exosome targeting (PAXT). NEXT functions as an RNA exosome cofactor that directs a subset of non-coding short-lived RNAs for exosomal degradation. NEXT is involved in surveillance and turnover of aberrant transcripts and non-coding RNAs. PAXT directs a subset of long and polyadenylated poly(A) RNAs for exosomal degradation. The RNA exosome is fundamental for the degradation of RNA in eukaryotic nuclei. Substrate targeting is facilitated by its cofactor ZCCHC8, which links to RNA-binding protein adapters. Associated with the RNA exosome complex and involved in the 3'-processing of the 7S pre-RNA to the mature 5.8S rRNA. May be involved in pre-mRNA splicing. In the context of NEXT complex can also in vitro unwind DNA:RNA heteroduplexes with a 3' poly (A) RNA tracking strand. Can promote unwinding and degradation of structured RNA substrates when associated with the nuclear exosome and its cofactors. Can displace a DNA strand while translocating on RNA to ultimately degrade the RNA within a DNA/RNA heteroduplex. Plays a role in DNA damage response. The polypeptide is Exosome RNA helicase MTR4 (Mus musculus (Mouse)).